Here is a 209-residue protein sequence, read N- to C-terminus: MKIVLATGNKGKLREFRQMCQDEVLPFSDLLGMFEIVEDGDTFAANALIKARTIYNKLKEKHPEEAYVVIADDSGISVPALGGIPGIYSARYAGEGASDKENLYKLIDTLKEKDFKSTPAYYTAAIAIVSDLGEYVVHGWMHGNVIDEARGDKGFGYDPMFIPAGFDKTLGEMDDGVKTAISHRGKALSLAKPIIQMLKNKEKNASDLK.

7 to 12 (TGNKGK) is a substrate binding site. Aspartate 73 serves as the catalytic Proton acceptor. Position 73 (aspartate 73) interacts with Mg(2+). Substrate contacts are provided by residues serine 74, 155-158 (FGYD), lysine 178, and 183-184 (HR).

It belongs to the HAM1 NTPase family. In terms of assembly, homodimer. Mg(2+) is required as a cofactor.

It carries out the reaction XTP + H2O = XMP + diphosphate + H(+). It catalyses the reaction dITP + H2O = dIMP + diphosphate + H(+). The enzyme catalyses ITP + H2O = IMP + diphosphate + H(+). In terms of biological role, pyrophosphatase that catalyzes the hydrolysis of nucleoside triphosphates to their monophosphate derivatives, with a high preference for the non-canonical purine nucleotides XTP (xanthosine triphosphate), dITP (deoxyinosine triphosphate) and ITP. Seems to function as a house-cleaning enzyme that removes non-canonical purine nucleotides from the nucleotide pool, thus preventing their incorporation into DNA/RNA and avoiding chromosomal lesions. In Sulfurovum sp. (strain NBC37-1), this protein is dITP/XTP pyrophosphatase.